A 329-amino-acid chain; its full sequence is Homeobox protein ceh-40 (329 aa).

The region spanning 3 to 186 is the PBC domain; it reads EASKSIMDLL…VIQLKKRYLD (184 aa). The PBC-A stretch occupies residues 10-90; it reads DLLSEVVKIT…EGVAGPDDSL (81 aa). A PBC-B region spans residues 93–186; sequence IQEAAGTDQY…VIQLKKRYLD (94 aa). The homeobox; TALE-type DNA-binding region spans 187 to 249; the sequence is ARRKRRNFSK…NKRIRYKKTM (63 aa). Positions 248–275 are disordered; it reads TMAKNEDERRENRKPEDRPPPGAPGAPY. Over residues 250 to 266 the composition is skewed to basic and acidic residues; the sequence is AKNEDERRENRKPEDRP.

Belongs to the TALE/PBX homeobox family. In terms of tissue distribution, expressed in head dopaminergic neurons.

The protein resides in the nucleus. Plays a role in regulating gene expression in dopaminergic neurons, acting redundantly with homeobox protein ceh-20 in head neurons. May activate dopamine pathway genes in concert with ETS domain-containing protein ast-1, and homeobox proteins ceh-43 and ceh-20. The chain is Homeobox protein ceh-40 (ceh-40) from Caenorhabditis elegans.